The chain runs to 29 residues: Putative membrane protein PmrR (29 aa).

Residues 5–27 (VYESLTTVFSVLVVSSFLYIWFA) traverse the membrane as a helical segment.

It is found in the cell inner membrane. Functionally, may bind to BasS and modulate its sensor kinase activity. The sequence is that of Putative membrane protein PmrR (pmrR) from Escherichia coli (strain K12).